The following is a 784-amino-acid chain: ATP-dependent zinc metalloprotease FTSH 9, chloroplastic/mitochondrial (784 aa).

3 stretches are compositionally biased toward low complexity: residues 1-12 (MSALQASLLLRP), 24-34 (PLPSSSASFPR), and 42-53 (PLPLRALASEGP). Residues 1 to 47 (MSALQASLLLRPLPSPLPPRRRLPLPSSSASFPRAGHHRRLPLPLRA) constitute a chloroplast and mitochondrion transit peptide. Residues 1 to 71 (MSALQASLLL…DPPPPELPAA (71 aa)) form a disordered region. Residues 54-69 (QPAPSPAPDPPPPELP) are compositionally biased toward pro residues. 2 consecutive transmembrane segments (helical) span residues 104-124 (WVLA…DWVV) and 267-287 (IFST…GAAA). Residue 368–375 (GSPGTGKT) coordinates ATP. Zn(2+) is bound at residue His601. Residue Glu602 is part of the active site. The Zn(2+) site is built by His605 and Asp679.

It in the N-terminal section; belongs to the AAA ATPase family. This sequence in the C-terminal section; belongs to the peptidase M41 family. The cofactor is Zn(2+).

The protein localises to the mitochondrion membrane. It is found in the plastid. It localises to the chloroplast thylakoid membrane. Probable ATP-dependent zinc metallopeptidase. The protein is ATP-dependent zinc metalloprotease FTSH 9, chloroplastic/mitochondrial (FTSH9) of Oryza sativa subsp. japonica (Rice).